A 94-amino-acid chain; its full sequence is Pyrimidine/purine nucleoside phosphorylase (94 aa).

This sequence belongs to the nucleoside phosphorylase PpnP family.

It catalyses the reaction a purine D-ribonucleoside + phosphate = a purine nucleobase + alpha-D-ribose 1-phosphate. The catalysed reaction is adenosine + phosphate = alpha-D-ribose 1-phosphate + adenine. The enzyme catalyses cytidine + phosphate = cytosine + alpha-D-ribose 1-phosphate. It carries out the reaction guanosine + phosphate = alpha-D-ribose 1-phosphate + guanine. It catalyses the reaction inosine + phosphate = alpha-D-ribose 1-phosphate + hypoxanthine. The catalysed reaction is thymidine + phosphate = 2-deoxy-alpha-D-ribose 1-phosphate + thymine. The enzyme catalyses uridine + phosphate = alpha-D-ribose 1-phosphate + uracil. It carries out the reaction xanthosine + phosphate = alpha-D-ribose 1-phosphate + xanthine. Catalyzes the phosphorolysis of diverse nucleosides, yielding D-ribose 1-phosphate and the respective free bases. Can use uridine, adenosine, guanosine, cytidine, thymidine, inosine and xanthosine as substrates. Also catalyzes the reverse reactions. The sequence is that of Pyrimidine/purine nucleoside phosphorylase from Cronobacter sakazakii (strain ATCC BAA-894) (Enterobacter sakazakii).